The primary structure comprises 359 residues: 3-dehydroquinate synthase (359 aa).

NAD(+) is bound by residues 71–76 (DGEAYK), 105–109 (GVVGD), 129–130 (TT), Lys142, and Lys151. Glu184, His247, and His264 together coordinate Zn(2+).

The protein belongs to the sugar phosphate cyclases superfamily. Dehydroquinate synthase family. It depends on Co(2+) as a cofactor. Requires Zn(2+) as cofactor. NAD(+) is required as a cofactor.

It is found in the cytoplasm. The enzyme catalyses 7-phospho-2-dehydro-3-deoxy-D-arabino-heptonate = 3-dehydroquinate + phosphate. Its pathway is metabolic intermediate biosynthesis; chorismate biosynthesis; chorismate from D-erythrose 4-phosphate and phosphoenolpyruvate: step 2/7. Functionally, catalyzes the conversion of 3-deoxy-D-arabino-heptulosonate 7-phosphate (DAHP) to dehydroquinate (DHQ). The protein is 3-dehydroquinate synthase of Burkholderia orbicola (strain MC0-3).